Reading from the N-terminus, the 295-residue chain is Ankyrin repeat and SOCS box protein 17 (295 aa).

Residues 146-176 form an ANK repeat; that stretch reads SGITPLFYVAQTRQSNIFKILLQYGILEREK. The region spanning 232–295 is the SOCS box domain; sequence LGRHPIISNW…RLQNYLNLEI (64 aa).

The protein belongs to the ankyrin SOCS box (ASB) family. In terms of tissue distribution, specifically expressed in testis. Not detected in other tissues tested.

Its pathway is protein modification; protein ubiquitination. In terms of biological role, may be a substrate-recognition component of a SCF-like ECS (Elongin-Cullin-SOCS-box protein) E3 ubiquitin-protein ligase complex which mediates the ubiquitination and subsequent proteasomal degradation of target proteins. This Homo sapiens (Human) protein is Ankyrin repeat and SOCS box protein 17 (ASB17).